The following is a 348-amino-acid chain: Serpentine receptor class alpha-29 (348 aa).

The next 6 helical transmembrane spans lie at 28–48, 108–130, 145–165, 193–213, 246–266, and 280–300; these read FILMIIVVSFITTALAVQTLW, FLYYQTALFSSFYCVSLFLDRLF, GFIVFLILQIICPIAIQFWTF, INDSRIIIMGTIFMCSLFLYI, CIIIFSQITCLGITSFVPSIF, and LILAFMAGATYSNFFLPLIVI.

This sequence belongs to the nematode receptor-like protein sra family.

The protein resides in the membrane. The chain is Serpentine receptor class alpha-29 (sra-29) from Caenorhabditis elegans.